The primary structure comprises 62 residues: UPF0370 protein ESA_00777 (62 aa).

Residues Leu4–Ile24 form a helical membrane-spanning segment. Over residues Met36–Lys51 the composition is skewed to basic and acidic residues. The disordered stretch occupies residues Met36–Lys62. Over residues Trp52 to Lys62 the composition is skewed to acidic residues.

Belongs to the UPF0370 family.

It localises to the cell membrane. The polypeptide is UPF0370 protein ESA_00777 (Cronobacter sakazakii (strain ATCC BAA-894) (Enterobacter sakazakii)).